A 690-amino-acid polypeptide reads, in one-letter code: SWI/SNF-related matrix-associated actin-dependent regulator of chromatin subfamily A-like protein 1 homolog (690 aa).

The tract at residues 30-49 (MQAAANATASTSSAAPPAPP) is disordered. Low complexity predominate over residues 31–44 (QAAANATASTSSAA). The HARP domain occupies 92–170 (PTSLIKPTIG…AVKVELEPLP (79 aa)). In terms of domain architecture, Helicase ATP-binding spans 209–367 (IFALERDGRI…FTQIRLIDHK (159 aa)). 222-229 (DEMGLGKS) contacts ATP. The DESH box motif lies at 316 to 319 (DESH). The Nuclear localization signal signature appears at 411-428 (RRLKADVLKDLPEKRREV). The 158-residue stretch at 482–639 (ILENYFYPDA…TFRTADKMHL (158 aa)) folds into the Helicase C-terminal domain.

The protein belongs to the SNF2/RAD54 helicase family. SMARCAL1 subfamily.

It is found in the nucleus. It carries out the reaction ATP + H2O = ADP + phosphate + H(+). In terms of biological role, ATP-dependent annealing helicase that catalyzes the rewinding of the stably unwound DNA. This chain is SWI/SNF-related matrix-associated actin-dependent regulator of chromatin subfamily A-like protein 1 homolog, found in Caenorhabditis elegans.